The sequence spans 287 residues: Small ribosomal subunit protein uS2 (287 aa).

Positions 233–287 are disordered; the sequence is HKAPQDDIEPMAEWEKQLLQSGDSSGETRPISGTDRPLDGDLSKGPAPQDEELSD. Polar residues predominate over residues 250–259; the sequence is LLQSGDSSGE.

The protein belongs to the universal ribosomal protein uS2 family.

In Tropheryma whipplei (strain TW08/27) (Whipple's bacillus), this protein is Small ribosomal subunit protein uS2.